The following is a 229-amino-acid chain: Endo-1,4-beta-xylanase 1 (229 aa).

The N-terminal stretch at 1–19 (MVAFSSLICALTSIASTLA) is a signal peptide. Residues 20–51 (MPTGLEPESSVNVTERGMYDFVLGAHNDHRRR) constitute a propeptide that is removed on maturation. Asn31 carries an N-linked (GlcNAc...) asparagine glycan. The 187-residue stretch at 42–228 (LGAHNDHRRR…GSGSASQSVS (187 aa)) folds into the GH11 domain. Tyr117 contributes to the substrate binding site. Glu126 (nucleophile) is an active-site residue. Substrate is bound by residues Tyr128, Arg160, Pro164, Gln174, and Tyr209. Residue Glu215 is the Proton donor of the active site.

Belongs to the glycosyl hydrolase 11 (cellulase G) family.

It is found in the secreted. The catalysed reaction is Endohydrolysis of (1-&gt;4)-beta-D-xylosidic linkages in xylans.. Its pathway is glycan degradation; xylan degradation. Functionally, glycoside hydrolase involved in the hydrolysis of xylan, a major plant cell wall hemicellulose made up of 1,4-beta-linked D-xylopyranose residues. Catalyzes the endohydrolysis of the main-chain 1,4-beta-glycosidic bonds connecting the xylose subunits yielding various xylooligosaccharides and xylose. The protein is Endo-1,4-beta-xylanase 1 of Hypocrea jecorina (strain QM6a) (Trichoderma reesei).